Here is a 380-residue protein sequence, read N- to C-terminus: Cytochrome b (380 aa).

The next 4 helical transmembrane spans lie at 34–54 (FGSL…FLAM), 78–99 (WLLR…YFHI), 114–134 (WNIG…GYVL), and 179–199 (FFTF…IHLL). Positions 84 and 98 each coordinate heme b. Heme b contacts are provided by H183 and H197. Residue H202 participates in a ubiquinone binding. The next 4 membrane-spanning stretches (helical) occupy residues 227–247 (YKDL…STFA), 289–309 (LGGV…PIIH), 321–341 (IAKT…WIGG), and 348–368 (FITI…LLIP).

The protein belongs to the cytochrome b family. In terms of assembly, the cytochrome bc1 complex contains 3 respiratory subunits (MT-CYB, CYC1 and UQCRFS1), 2 core proteins (UQCRC1 and UQCRC2) and probably 6 low-molecular weight proteins. The cofactor is heme b.

It localises to the mitochondrion inner membrane. Functionally, component of the ubiquinol-cytochrome c reductase complex (complex III or cytochrome b-c1 complex) that is part of the mitochondrial respiratory chain. The b-c1 complex mediates electron transfer from ubiquinol to cytochrome c. Contributes to the generation of a proton gradient across the mitochondrial membrane that is then used for ATP synthesis. This is Cytochrome b (mt-cyb) from Pelophylax nigromaculatus (Black-spotted frog).